The primary structure comprises 702 residues: Ribosomal RNA large subunit methyltransferase K/L (702 aa).

One can recognise a THUMP domain in the interval 43-154 (LIYQSLMWSR…KETASIALDL (112 aa)).

Belongs to the methyltransferase superfamily. RlmKL family.

It is found in the cytoplasm. The enzyme catalyses guanosine(2445) in 23S rRNA + S-adenosyl-L-methionine = N(2)-methylguanosine(2445) in 23S rRNA + S-adenosyl-L-homocysteine + H(+). The catalysed reaction is guanosine(2069) in 23S rRNA + S-adenosyl-L-methionine = N(2)-methylguanosine(2069) in 23S rRNA + S-adenosyl-L-homocysteine + H(+). Functionally, specifically methylates the guanine in position 2445 (m2G2445) and the guanine in position 2069 (m7G2069) of 23S rRNA. The protein is Ribosomal RNA large subunit methyltransferase K/L of Salmonella choleraesuis (strain SC-B67).